We begin with the raw amino-acid sequence, 72 residues long: Conotoxin VnMKLT2-0221 (72 aa).

The signal sequence occupies residues 1–22 (MKLTCVLIVAVLFLTACQLTTA). Residues 23–45 (ASYARSERQHPDLGSSDQNSKLT) constitute a propeptide that is removed on maturation. The tract at residues 26 to 45 (ARSERQHPDLGSSDQNSKLT) is disordered. 3 cysteine pairs are disulfide-bonded: cysteine 48–cysteine 62, cysteine 55–cysteine 66, and cysteine 61–cysteine 71.

Belongs to the conotoxin O1 superfamily. Expressed by the venom duct.

It localises to the secreted. The protein is Conotoxin VnMKLT2-0221 of Conus ventricosus (Mediterranean cone).